The sequence spans 570 residues: Sulfite reductase [NADPH] hemoprotein beta-component (570 aa).

[4Fe-4S] cluster is bound by residues Cys434, Cys440, Cys479, and Cys483. Residue Cys483 participates in siroheme binding.

The protein belongs to the nitrite and sulfite reductase 4Fe-4S domain family. Alpha(8)-beta(8). The alpha component is a flavoprotein, the beta component is a hemoprotein. Siroheme is required as a cofactor. Requires [4Fe-4S] cluster as cofactor.

The catalysed reaction is hydrogen sulfide + 3 NADP(+) + 3 H2O = sulfite + 3 NADPH + 4 H(+). Its pathway is sulfur metabolism; hydrogen sulfide biosynthesis; hydrogen sulfide from sulfite (NADPH route): step 1/1. In terms of biological role, component of the sulfite reductase complex that catalyzes the 6-electron reduction of sulfite to sulfide. This is one of several activities required for the biosynthesis of L-cysteine from sulfate. The sequence is that of Sulfite reductase [NADPH] hemoprotein beta-component from Salmonella newport (strain SL254).